The following is a 529-amino-acid chain: Bifunctional purine biosynthesis protein PurH (529 aa).

An MGS-like domain is found at 2 to 149; sequence TDLHPVRRAL…KNHAFVNVVV (148 aa).

It belongs to the PurH family.

It carries out the reaction (6R)-10-formyltetrahydrofolate + 5-amino-1-(5-phospho-beta-D-ribosyl)imidazole-4-carboxamide = 5-formamido-1-(5-phospho-D-ribosyl)imidazole-4-carboxamide + (6S)-5,6,7,8-tetrahydrofolate. The enzyme catalyses IMP + H2O = 5-formamido-1-(5-phospho-D-ribosyl)imidazole-4-carboxamide. Its pathway is purine metabolism; IMP biosynthesis via de novo pathway; 5-formamido-1-(5-phospho-D-ribosyl)imidazole-4-carboxamide from 5-amino-1-(5-phospho-D-ribosyl)imidazole-4-carboxamide (10-formyl THF route): step 1/1. It functions in the pathway purine metabolism; IMP biosynthesis via de novo pathway; IMP from 5-formamido-1-(5-phospho-D-ribosyl)imidazole-4-carboxamide: step 1/1. This Ruegeria sp. (strain TM1040) (Silicibacter sp.) protein is Bifunctional purine biosynthesis protein PurH.